A 64-amino-acid chain; its full sequence is Temporin-ALe (64 aa).

An N-terminal signal peptide occupies residues 1–22 (MFTLKKSLLLLFFLGTINLSLC). Residues 23–47 (EQERNAEEERRDEPDERNAEVEKRF) constitute a propeptide that is removed on maturation. Leu62 carries the leucine amide modification.

As to expression, expressed by the skin glands.

The protein resides in the secreted. Antimicrobial peptide with activity against Gram-positive and Gram-negative bacteria and against fungi. Has been tested against S.aureus (MIC=1.25 ug/mL), B.pumilus (MIC=5.0 ug/mL), B.cereus (MIC=15.0 ug/mL), E.coli (MIC=1.25 ug/mL), B.dysenteriae (MIC=5.0 ug/mL), A.cacoaceticus (MIC=15.0 ug/mL), P.aeruginosa (MIC=5.0 ug/mL) and C.albicans (MIC=1.25 ug/mL). Also shows a weak hemolytic activity. In Amolops loloensis (Lolokou Sucker Frog), this protein is Temporin-ALe.